We begin with the raw amino-acid sequence, 83 residues long: Mu-theraphotoxin-Hhn2j 2 (83 aa).

Positions M1–A21 are cleaved as a signal peptide. Residues S22–R48 constitute a propeptide that is removed on maturation. Cystine bridges form between C50–C65, C57–C70, and C64–C77. Residue L81 is modified to Leucine amide.

The protein belongs to the neurotoxin 10 (Hwtx-1) family. 15 (Hntx-3) subfamily. As to quaternary structure, monomer. As to expression, expressed by the venom gland.

The protein resides in the secreted. In terms of biological role, lethal neurotoxin. Selectively blocks tetrodotoxin-sensitive voltage-gated sodium channels (Nav). Does not affect tetrodotoxin-resistant voltage-gated sodium channels or calcium channels. The chain is Mu-theraphotoxin-Hhn2j 2 from Cyriopagopus hainanus (Chinese bird spider).